The following is a 402-amino-acid chain: LIM/homeobox protein Lhx5 (402 aa).

LIM zinc-binding domains are found at residues 3–61 (VHCA…RRFG) and 62–125 (TKCA…SSSL). The segment covering 124–135 (SLKEGSLNSVSS) has biased composition (low complexity). Disordered stretches follow at residues 124 to 186 (SLKE…PRTT) and 298 to 402 (HGPP…AAVW). The segment covering 151-167 (DDPKETDNSTSSDKETA) has biased composition (basic and acidic residues). A DNA-binding region (homeobox) is located at residues 180-239 (RRGPRTTIKAKQLETLKAAFAATPKPTRHIREQLAQETGLNMRVIQVWFQNRRSKERRMK). Composition is skewed to low complexity over residues 300-311 (PPSQAQSPADSS) and 322-336 (PLGA…PHAA).

In terms of tissue distribution, expressed in fetal brain and in various regions of the adult central nervous system including the spinal cord, the thalamus, and the cerebellum.

It is found in the nucleus. In terms of biological role, plays an essential role in the regulation of neuronal differentiation and migration during development of the central nervous system. This Homo sapiens (Human) protein is LIM/homeobox protein Lhx5 (LHX5).